Consider the following 311-residue polypeptide: Ribonuclease HIII (311 aa).

The RNase H type-2 domain maps to 95 to 311 (MSIVGSDEVG…NTEKAFRLLK (217 aa)). D101, E102, and D206 together coordinate a divalent metal cation.

This sequence belongs to the RNase HII family. RnhC subfamily. Requires Mn(2+) as cofactor. It depends on Mg(2+) as a cofactor.

The protein localises to the cytoplasm. The catalysed reaction is Endonucleolytic cleavage to 5'-phosphomonoester.. In terms of biological role, endonuclease that specifically degrades the RNA of RNA-DNA hybrids. The polypeptide is Ribonuclease HIII (Bacillus anthracis (strain A0248)).